A 55-amino-acid chain; its full sequence is Probable Rubredoxin-2 (55 aa).

Residues 4-54 (MARYQCMCGWVYDEDKGEPSQNIPPGTKFEDLPDTFRCPQCGLGKNAFRKI) enclose the Rubredoxin-like domain. Fe cation-binding residues include Cys-9, Cys-11, Cys-41, and Cys-44.

It belongs to the rubredoxin family. Fe(3+) is required as a cofactor.

Its function is as follows. Rubredoxin is a small nonheme, iron protein lacking acid-labile sulfide. Its single Fe, chelated to 4 Cys, functions as an electron acceptor and may also stabilize the conformation of the molecule. In Methanocaldococcus jannaschii (strain ATCC 43067 / DSM 2661 / JAL-1 / JCM 10045 / NBRC 100440) (Methanococcus jannaschii), this protein is Probable Rubredoxin-2.